Here is a 76-residue protein sequence, read N- to C-terminus: Large ribosomal subunit protein eL20 (76 aa).

The protein belongs to the eukaryotic ribosomal protein eL20 family. In terms of assembly, part of the 50S ribosomal subunit. Binds 23S rRNA.

This is Large ribosomal subunit protein eL20 from Methanococcus vannielii (strain ATCC 35089 / DSM 1224 / JCM 13029 / OCM 148 / SB).